The primary structure comprises 381 residues: tRNA (guanine(26)-N(2))-dimethyltransferase (381 aa).

One can recognise a Trm1 methyltransferase domain in the interval 7–378 (IEVQEGKAKI…APYEVFIETI (372 aa)). The S-adenosyl-L-methionine site is built by R39, R64, D81, D123, and A124.

This sequence belongs to the class I-like SAM-binding methyltransferase superfamily. Trm1 family.

The catalysed reaction is guanosine(26) in tRNA + 2 S-adenosyl-L-methionine = N(2)-dimethylguanosine(26) in tRNA + 2 S-adenosyl-L-homocysteine + 2 H(+). Its function is as follows. Dimethylates a single guanine residue at position 26 of a number of tRNAs using S-adenosyl-L-methionine as donor of the methyl groups. The protein is tRNA (guanine(26)-N(2))-dimethyltransferase of Pyrococcus horikoshii (strain ATCC 700860 / DSM 12428 / JCM 9974 / NBRC 100139 / OT-3).